A 186-amino-acid chain; its full sequence is Large ribosomal subunit protein uL5 (186 aa).

The protein belongs to the universal ribosomal protein uL5 family. Part of the 50S ribosomal subunit; part of the 5S rRNA/L5/L18/L25 subcomplex. Contacts the 5S rRNA and the P site tRNA. Forms a bridge to the 30S subunit in the 70S ribosome.

This is one of the proteins that bind and probably mediate the attachment of the 5S RNA into the large ribosomal subunit, where it forms part of the central protuberance. In the 70S ribosome it contacts protein S13 of the 30S subunit (bridge B1b), connecting the 2 subunits; this bridge is implicated in subunit movement. Contacts the P site tRNA; the 5S rRNA and some of its associated proteins might help stabilize positioning of ribosome-bound tRNAs. This Legionella pneumophila subsp. pneumophila (strain Philadelphia 1 / ATCC 33152 / DSM 7513) protein is Large ribosomal subunit protein uL5.